The primary structure comprises 391 residues: Multidrug resistance protein MdtL (391 aa).

12 helical membrane passes run 4 to 24 (FLICSFALVLLYPAGIDMYLV), 42 to 62 (IAFSVYLAGMAAAMLFAGKVA), 69 to 89 (PVAIPGAALFIIASVFCSLAE), 93 to 113 (LFLAGRFLQGLGAGCCYVVAF), 131 to 151 (LLNGITCIIPVLAPVLGHLIM), 158 to 178 (SLFWAMAMMGIAVLMLSLFIL), 203 to 222 (FFLSRVVITTLSVSVILTFV), 245 to 265 (ALTAGVSMTVSFSTPFALGIF), 269 to 289 (TLMITSQVLFLAAGITLAVSP), 293 to 313 (VSLFGITLICAGFSVGFGVAM), 331 to 351 (LGIAQVCGSSLWIWLAAVVGI), and 356 to 376 (MLIGILIACSIVSLLLIMFVA).

The protein belongs to the major facilitator superfamily. DHA1 family. MdtL (TC 2.A.1.2.22) subfamily.

The protein localises to the cell inner membrane. Its function is as follows. Confers resistance to chloramphenicol. This chain is Multidrug resistance protein MdtL, found in Escherichia coli (strain 55989 / EAEC).